We begin with the raw amino-acid sequence, 442 residues long: ATP-dependent RNA helicase SUB2 (442 aa).

A Q motif motif is present at residues 59–87; it reads TGFRDFLLKPELLRAISDLGFEHPSEVQQ. Residues 90–265 form the Helicase ATP-binding domain; the sequence is IPQAILGTDV…KKFMQSPLEI (176 aa). 103–110 is an ATP binding site; that stretch reads AKSGMGKT. Residues 212 to 215 carry the DECD box motif; sequence DECD. A Helicase C-terminal domain is found at 277 to 438; that stretch reads GLQQFYLKLE…TLPETVDPAT (162 aa).

Belongs to the DEAD box helicase family. DECD subfamily.

The protein resides in the nucleus. The catalysed reaction is ATP + H2O = ADP + phosphate + H(+). Its function is as follows. ATP-binding RNA helicase involved in transcription elongation and required for the export of mRNA out of the nucleus. SUB2 also plays a role in pre-mRNA splicing and spliceosome assembly. May be involved in rDNA and telomeric silencing, and maintenance of genome integrity. The protein is ATP-dependent RNA helicase SUB2 (SUB2) of Cryptococcus neoformans var. neoformans serotype D (strain JEC21 / ATCC MYA-565) (Filobasidiella neoformans).